We begin with the raw amino-acid sequence, 349 residues long: GDSL esterase/lipase At2g19060 (349 aa).

Residues 1-25 (MADKMFKALLWAFATAVVMAEAVRG) form the signal peptide. The Nucleophile role is filled by serine 37. Asparagine 178 carries an N-linked (GlcNAc...) asparagine glycan. Catalysis depends on residues aspartate 317 and histidine 320.

It belongs to the 'GDSL' lipolytic enzyme family.

The protein localises to the secreted. This Arabidopsis thaliana (Mouse-ear cress) protein is GDSL esterase/lipase At2g19060.